Here is a 75-residue protein sequence, read N- to C-terminus: Exodeoxyribonuclease 7 small subunit (75 aa).

It belongs to the XseB family. As to quaternary structure, heterooligomer composed of large and small subunits.

Its subcellular location is the cytoplasm. The enzyme catalyses Exonucleolytic cleavage in either 5'- to 3'- or 3'- to 5'-direction to yield nucleoside 5'-phosphates.. Bidirectionally degrades single-stranded DNA into large acid-insoluble oligonucleotides, which are then degraded further into small acid-soluble oligonucleotides. The sequence is that of Exodeoxyribonuclease 7 small subunit from Thermoanaerobacter sp. (strain X514).